Reading from the N-terminus, the 212-residue chain is Neuroendocrine protein 7B2 (212 aa).

An N-terminal signal peptide occupies residues 1–26 (MVSRMVSTMLSGLLFWLASGWTPAFA). Residues Cys-120 and Cys-130 are joined by a disulfide bond. Ser-141 and Ser-205 each carry phosphoserine. Residues 174 to 212 (GGERRKRRSVNPYLQGQRLDNVVAKKSVPHFSDEDKDPE) are disordered.

It belongs to the 7B2 family. As to quaternary structure, interacts with PCSK2/PC2 early in the secretory pathway. Dissociation occurs at later stages. Proteolytically cleaved in the Golgi by a furin-like convertase to generate bioactive peptides. Post-translationally, sulfated on tyrosine residues.

The protein resides in the secreted. Its function is as follows. Acts as a molecular chaperone for PCSK2/PC2, preventing its premature activation in the regulated secretory pathway. Binds to inactive PCSK2 in the endoplasmic reticulum and facilitates its transport from there to later compartments of the secretory pathway where it is proteolytically matured and activated. Also required for cleavage of PCSK2 but does not appear to be involved in its folding. Plays a role in regulating pituitary hormone secretion. The C-terminal peptide inhibits PCSK2 in vitro. The sequence is that of Neuroendocrine protein 7B2 (SCG5) from Homo sapiens (Human).